A 322-amino-acid polypeptide reads, in one-letter code: Acetyl-coenzyme A carboxylase carboxyl transferase subunit alpha 2 (322 aa).

Positions 37 to 294 (EINRLSARSE…KRVLQESLRN (258 aa)) constitute a CoA carboxyltransferase C-terminal domain.

This sequence belongs to the AccA family. Acetyl-CoA carboxylase is a heterohexamer composed of biotin carboxyl carrier protein (AccB), biotin carboxylase (AccC) and two subunits each of ACCase subunit alpha (AccA) and ACCase subunit beta (AccD).

Its subcellular location is the cytoplasm. It carries out the reaction N(6)-carboxybiotinyl-L-lysyl-[protein] + acetyl-CoA = N(6)-biotinyl-L-lysyl-[protein] + malonyl-CoA. It functions in the pathway lipid metabolism; malonyl-CoA biosynthesis; malonyl-CoA from acetyl-CoA: step 1/1. Functionally, component of the acetyl coenzyme A carboxylase (ACC) complex. First, biotin carboxylase catalyzes the carboxylation of biotin on its carrier protein (BCCP) and then the CO(2) group is transferred by the carboxyltransferase to acetyl-CoA to form malonyl-CoA. Confers resistance to the endogenous polyketide antibiotic thailandamide. Can replace the endogenous gene in S.typhimurium, conferring slow growth and resistance to thailandamide. Can also replace the endogenous gene in E.coli, conferring resistance to thailandamide. The sequence is that of Acetyl-coenzyme A carboxylase carboxyl transferase subunit alpha 2 from Burkholderia thailandensis (strain ATCC 700388 / DSM 13276 / CCUG 48851 / CIP 106301 / E264).